Here is a 335-residue protein sequence, read N- to C-terminus: MYSLIRKCLFSMDAETAHNFSIQALKLAGKLPINVLPMPLNPVEVMGLQFKNPIGLAAGADKNGEAIDGFGKLGFGFIEVGTVTPVAQDGNPKPRQFRILEAEGIINRNGFNNLGVDVLVENVKKAKYDGIIGINIGKNAVTPIERALDDYQICLRKVYEHADYITVNISSPNTKNLRTLQYGEALDDLLRSLKSEQESLSQKFNRYKPLVLKIAPDLTDEEIASVADGLIRHKIDGVIAGNTTLSRDPVVGLKNAEQQGGLSGKPLNTLSTRLISTLAEELNGTLPIIGSGGIHSVASGQEKIDAGASLLQVYSAMIYQGLALIQNLAKHIQVR.

FMN contacts are provided by residues 58–62 (AGADK) and Thr82. Lys62 provides a ligand contact to substrate. 107–111 (NRNGF) contacts substrate. Positions 135 and 168 each coordinate FMN. Asn168 serves as a coordination point for substrate. Ser171 (nucleophile) is an active-site residue. Asn173 lines the substrate pocket. Positions 213 and 241 each coordinate FMN. 242-243 (NT) provides a ligand contact to substrate. Residues Gly264, Gly293, and 314-315 (YS) each bind FMN.

It belongs to the dihydroorotate dehydrogenase family. Type 2 subfamily. Monomer. FMN serves as cofactor.

The protein localises to the cell membrane. It catalyses the reaction (S)-dihydroorotate + a quinone = orotate + a quinol. Its pathway is pyrimidine metabolism; UMP biosynthesis via de novo pathway; orotate from (S)-dihydroorotate (quinone route): step 1/1. Functionally, catalyzes the conversion of dihydroorotate to orotate with quinone as electron acceptor. In Actinobacillus pleuropneumoniae serotype 7 (strain AP76), this protein is Dihydroorotate dehydrogenase (quinone).